A 444-amino-acid chain; its full sequence is Exodeoxyribonuclease 7 large subunit (444 aa).

It belongs to the XseA family. As to quaternary structure, heterooligomer composed of large and small subunits.

The protein resides in the cytoplasm. It catalyses the reaction Exonucleolytic cleavage in either 5'- to 3'- or 3'- to 5'-direction to yield nucleoside 5'-phosphates.. Its function is as follows. Bidirectionally degrades single-stranded DNA into large acid-insoluble oligonucleotides, which are then degraded further into small acid-soluble oligonucleotides. This Rickettsia conorii (strain ATCC VR-613 / Malish 7) protein is Exodeoxyribonuclease 7 large subunit.